Consider the following 131-residue polypeptide: Profilin-9 (131 aa).

Cys-13 and Cys-115 are disulfide-bonded. The Involved in PIP2 interaction motif lies at 81–97 (AVIRGKKGSGGITVKKT). Position 111 is a phosphothreonine (Thr-111).

This sequence belongs to the profilin family. In terms of assembly, occurs in many kinds of cells as a complex with monomeric actin in a 1:1 ratio. Post-translationally, phosphorylated by MAP kinases.

Its subcellular location is the cytoplasm. It localises to the cytoskeleton. Its function is as follows. Binds to actin and affects the structure of the cytoskeleton. At high concentrations, profilin prevents the polymerization of actin, whereas it enhances it at low concentrations. This is Profilin-9 from Zea mays (Maize).